The sequence spans 264 residues: Thymidylate synthase (264 aa).

Arginine 21 contacts dUMP. Histidine 51 serves as a coordination point for (6R)-5,10-methylene-5,6,7,8-tetrahydrofolate. DUMP is bound at residue 126–127 (RR). The active-site Nucleophile is the cysteine 146. DUMP is bound by residues 166–169 (RSCD), asparagine 177, and 207–209 (HLY). Aspartate 169 lines the (6R)-5,10-methylene-5,6,7,8-tetrahydrofolate pocket. Alanine 263 provides a ligand contact to (6R)-5,10-methylene-5,6,7,8-tetrahydrofolate.

Belongs to the thymidylate synthase family. Bacterial-type ThyA subfamily. In terms of assembly, homodimer.

The protein localises to the cytoplasm. The catalysed reaction is dUMP + (6R)-5,10-methylene-5,6,7,8-tetrahydrofolate = 7,8-dihydrofolate + dTMP. It functions in the pathway pyrimidine metabolism; dTTP biosynthesis. Functionally, catalyzes the reductive methylation of 2'-deoxyuridine-5'-monophosphate (dUMP) to 2'-deoxythymidine-5'-monophosphate (dTMP) while utilizing 5,10-methylenetetrahydrofolate (mTHF) as the methyl donor and reductant in the reaction, yielding dihydrofolate (DHF) as a by-product. This enzymatic reaction provides an intracellular de novo source of dTMP, an essential precursor for DNA biosynthesis. This Pectobacterium carotovorum subsp. carotovorum (strain PC1) protein is Thymidylate synthase.